We begin with the raw amino-acid sequence, 300 residues long: Protein MoxJ (300 aa).

Residues M1 to A25 form the signal peptide.

The protein localises to the periplasm. In terms of biological role, may be involved in the assemblage of active methanol dehydrogenase and/or its cofactor PQQ in the periplasm. This is Protein MoxJ (moxJ) from Methylorubrum extorquens (strain ATCC 14718 / DSM 1338 / JCM 2805 / NCIMB 9133 / AM1) (Methylobacterium extorquens).